The following is a 249-amino-acid chain: Tumor necrosis factor receptor superfamily member 13B (249 aa).

Over 1-128 (MAMAFCPKDQ…LSSDQLTLYC (128 aa)) the chain is Extracellular. TNFR-Cys repeat units lie at residues 5–38 (FCPK…TDFC) and 42–76 (NCRK…AHFC). 6 disulfides stabilise this stretch: cysteine 6/cysteine 19, cysteine 22/cysteine 34, cysteine 26/cysteine 38, cysteine 43/cysteine 58, cysteine 61/cysteine 72, and cysteine 65/cysteine 76. The segment at 86–116 (LQPELGRPQAGEVEVRSDNSGRHQGSEHGPG) is disordered. The segment covering 98 to 111 (VEVRSDNSGRHQGS) has biased composition (basic and acidic residues). A helical; Signal-anchor for type III membrane protein membrane pass occupies residues 129-149 (TLGVCLCAIFCCFLVALASFL). The Cytoplasmic segment spans residues 150–249 (RRRGEPLPSQ…ASTGDARPAT (100 aa)). Residues 156 to 176 (LPSQPAGPRGSQANSPHAHRP) form a disordered region.

As to quaternary structure, binds TRAF2, TRAF5 and TRAF6. Binds the NH2-terminal domain of CAMLG with its C-terminus.

It is found in the membrane. Its function is as follows. Receptor for TNFSF13/APRIL and TNFSF13B/TALL1/BAFF/BLYS that binds both ligands with similar high affinity. Mediates calcineurin-dependent activation of NF-AT, as well as activation of NF-kappa-B and AP-1. Involved in the stimulation of B- and T-cell function and the regulation of humoral immunity. This is Tumor necrosis factor receptor superfamily member 13B (Tnfrsf13b) from Mus musculus (Mouse).